Here is a 171-residue protein sequence, read N- to C-terminus: MSKKSGLSFLWLSAVAFVVDLLTKYIVVQKFDLYESVNVLPVFNLTYVRNYGAAFSFLADHSGWQQYFFILLALAISGMLVYFLAKNNAEQKIQNSAYALIIGGALANMVDRTYNGFVVDFFDFYWDIYHYPVFNIADIAICIGAGLLALDAFKSEKKKVQDKQVEKCGQK.

Transmembrane regions (helical) follow at residues 8–28 (SFLW…YIVV), 64–84 (WQQY…VYFL), and 96–118 (SAYA…NGFV). Active-site residues include D120 and D138. Residues 133-153 (VFNIADIAICIGAGLLALDAF) traverse the membrane as a helical segment.

This sequence belongs to the peptidase A8 family.

Its subcellular location is the cell inner membrane. The enzyme catalyses Release of signal peptides from bacterial membrane prolipoproteins. Hydrolyzes -Xaa-Yaa-Zaa-|-(S,diacylglyceryl)Cys-, in which Xaa is hydrophobic (preferably Leu), and Yaa (Ala or Ser) and Zaa (Gly or Ala) have small, neutral side chains.. The protein operates within protein modification; lipoprotein biosynthesis (signal peptide cleavage). In terms of biological role, this protein specifically catalyzes the removal of signal peptides from prolipoproteins. The chain is Lipoprotein signal peptidase from Haemophilus influenzae (strain 86-028NP).